Here is a 66-residue protein sequence, read N- to C-terminus: Large ribosomal subunit protein uL29 (66 aa).

The protein belongs to the universal ribosomal protein uL29 family.

The sequence is that of Large ribosomal subunit protein uL29 from Thermoplasma volcanium (strain ATCC 51530 / DSM 4299 / JCM 9571 / NBRC 15438 / GSS1).